The chain runs to 339 residues: UDP-N-acetylglucosamine--N-acetylmuramyl-(pentapeptide) pyrophosphoryl-undecaprenol N-acetylglucosamine transferase (339 aa).

UDP-N-acetyl-alpha-D-glucosamine-binding positions include 11–13 (TGG), Asn127, Arg170, Ser188, Ile235, and Gln280.

Belongs to the glycosyltransferase 28 family. MurG subfamily.

Its subcellular location is the cell inner membrane. The enzyme catalyses di-trans,octa-cis-undecaprenyl diphospho-N-acetyl-alpha-D-muramoyl-L-alanyl-D-glutamyl-meso-2,6-diaminopimeloyl-D-alanyl-D-alanine + UDP-N-acetyl-alpha-D-glucosamine = di-trans,octa-cis-undecaprenyl diphospho-[N-acetyl-alpha-D-glucosaminyl-(1-&gt;4)]-N-acetyl-alpha-D-muramoyl-L-alanyl-D-glutamyl-meso-2,6-diaminopimeloyl-D-alanyl-D-alanine + UDP + H(+). Its pathway is cell wall biogenesis; peptidoglycan biosynthesis. Its function is as follows. Cell wall formation. Catalyzes the transfer of a GlcNAc subunit on undecaprenyl-pyrophosphoryl-MurNAc-pentapeptide (lipid intermediate I) to form undecaprenyl-pyrophosphoryl-MurNAc-(pentapeptide)GlcNAc (lipid intermediate II). The protein is UDP-N-acetylglucosamine--N-acetylmuramyl-(pentapeptide) pyrophosphoryl-undecaprenol N-acetylglucosamine transferase of Thermotoga neapolitana (strain ATCC 49049 / DSM 4359 / NBRC 107923 / NS-E).